The sequence spans 290 residues: 4-hydroxybenzoate octaprenyltransferase (290 aa).

6 consecutive transmembrane segments (helical) span residues 41–61 (WPLL…GCAM), 89–109 (WEAV…IQPL), 133–153 (FFAI…PMAF), 158–178 (DTVP…SVAY), 202–224 (FGRF…YVWI), and 269–289 (WLGG…GTAG).

It belongs to the UbiA prenyltransferase family. The cofactor is Mg(2+).

It is found in the cell inner membrane. The enzyme catalyses all-trans-octaprenyl diphosphate + 4-hydroxybenzoate = 4-hydroxy-3-(all-trans-octaprenyl)benzoate + diphosphate. Its pathway is cofactor biosynthesis; ubiquinone biosynthesis. In terms of biological role, catalyzes the prenylation of para-hydroxybenzoate (PHB) with an all-trans polyprenyl group. Mediates the second step in the final reaction sequence of ubiquinone-8 (UQ-8) biosynthesis, which is the condensation of the polyisoprenoid side chain with PHB, generating the first membrane-bound Q intermediate 3-octaprenyl-4-hydroxybenzoate. The polypeptide is 4-hydroxybenzoate octaprenyltransferase (Burkholderia ambifaria (strain MC40-6)).